The following is a 1258-amino-acid chain: Cohesin subunit SA-1 (1258 aa).

Residues 1-59 (MITSELPVLQDSTNETTAHSDAGSELEETEVKGKRKRGRPGRPPSTNKKPRKSPGEKSR) are disordered. Residues 10–19 (QDSTNETTAH) show a composition bias toward polar residues. Ser24 is subject to Phosphoserine. An SCD domain is found at 296–381 (FVHRYRDAIA…NRFKDRIVSM (86 aa)). Phosphoserine occurs at positions 756, 1062, and 1065. A disordered region spans residues 1055 to 1148 (GGEDDRMSVN…EHGSEPDFLH (94 aa)). The segment covering 1062 to 1075 (SVNSGSSSSKTSSV) has biased composition (low complexity). Residues 1076 to 1087 (RSKKGRPPLHRK) are compositionally biased toward basic residues. At Ser1093 the chain carries Phosphoserine. A compositionally biased stretch (polar residues) spans 1095–1106 (DNTWLNRTDTMI). The segment covering 1137 to 1146 (ESEHGSEPDF) has biased composition (basic and acidic residues). Residue Lys1161 forms a Glycyl lysine isopeptide (Lys-Gly) (interchain with G-Cter in SUMO2) linkage.

The protein belongs to the SCC3 family. In terms of assembly, cohesin complexes are composed of a heterodimer between a SMC1 protein (SMC1A or SMC1B) and SMC3, which are attached via their hinge domain, and RAD21 which link them at their heads, and one STAG protein (STAG1, STAG2 or STAG3). In cohesin complexes, STAG1 is mutually exclusive with STAG2 and STAG3. Interacts directly with RAD21 in cohesin complex. The cohesin complex interacts with the cohesin loading complex subunits NIPBL/Scc2 (via HEAT repeats) and MAU2/Scc4. NIPBL directly contacts all members of the complex, RAD21, SMC1A/B, SMC3 and STAG1. Phosphorylated by PLK1. The large dissociation of cohesin from chromosome arms during prophase is partly due to its phosphorylation.

It is found in the nucleus. It localises to the chromosome. In terms of biological role, component of cohesin complex, a complex required for the cohesion of sister chromatids after DNA replication. The cohesin complex apparently forms a large proteinaceous ring within which sister chromatids can be trapped. At anaphase, the complex is cleaved and dissociates from chromatin, allowing sister chromatids to segregate. The cohesin complex may also play a role in spindle pole assembly during mitosis. The chain is Cohesin subunit SA-1 (Stag1) from Mus musculus (Mouse).